Reading from the N-terminus, the 502-residue chain is ATP synthase subunit alpha (502 aa).

The segment at 115-139 is disordered; it reads VDGLGPVETTETRPIESPAPGVMDR. 169-176 contacts ATP; the sequence is GDRQTGKT.

The protein belongs to the ATPase alpha/beta chains family. As to quaternary structure, F-type ATPases have 2 components, CF(1) - the catalytic core - and CF(0) - the membrane proton channel. CF(1) has five subunits: alpha(3), beta(3), gamma(1), delta(1), epsilon(1). CF(0) has three main subunits: a(1), b(2) and c(9-12). The alpha and beta chains form an alternating ring which encloses part of the gamma chain. CF(1) is attached to CF(0) by a central stalk formed by the gamma and epsilon chains, while a peripheral stalk is formed by the delta and b chains.

The protein resides in the cell membrane. The enzyme catalyses ATP + H2O + 4 H(+)(in) = ADP + phosphate + 5 H(+)(out). In terms of biological role, produces ATP from ADP in the presence of a proton gradient across the membrane. The alpha chain is a regulatory subunit. The chain is ATP synthase subunit alpha from Geobacillus thermodenitrificans (strain NG80-2).